The chain runs to 107 residues: MQQVQLKLKSFDPVYINQLISLLNDVLDTLEIQNSKEIFLPSKIKKITVIRSPHIHKKSRDQFQIKRYKRSMIISFTNIDILHAFLEICKDLHVVGVQIHISVKYHS.

This sequence belongs to the universal ribosomal protein uS10 family.

It is found in the mitochondrion. The protein is Small ribosomal subunit protein uS10m (RPS10) of Prototheca wickerhamii.